We begin with the raw amino-acid sequence, 120 residues long: Large ribosomal subunit protein bL12 (120 aa).

It belongs to the bacterial ribosomal protein bL12 family. In terms of assembly, homodimer. Part of the ribosomal stalk of the 50S ribosomal subunit. Forms a multimeric L10(L12)X complex, where L10 forms an elongated spine to which 2 to 4 L12 dimers bind in a sequential fashion. Binds GTP-bound translation factors.

Forms part of the ribosomal stalk which helps the ribosome interact with GTP-bound translation factors. Is thus essential for accurate translation. This chain is Large ribosomal subunit protein bL12, found in Clostridium botulinum (strain Alaska E43 / Type E3).